The primary structure comprises 165 residues: MSDLLHKLNFKIADASPEYKQRRKIQMIRFFTASAVTIFASRFAYRATVSRQYIPTLFQGNHSPPLSYNFTTDAAVAVGTGTLLCGSVTGMTVFGLCWILDVSNIKEFGWRMKSMLGGWESEKKLSEAPMDEESSYIQDSLNDILDGKYDFENDTEEVAGELKTN.

2 helical membrane-spanning segments follow: residues 27–49 (MIRF…RATV) and 78–100 (VGTG…CWIL).

Belongs to the AIM11 family.

It localises to the membrane. The polypeptide is Altered inheritance of mitochondria protein 11 (AIM11) (Candida albicans (strain SC5314 / ATCC MYA-2876) (Yeast)).